The sequence spans 206 residues: Imidazoleglycerol-phosphate dehydratase (206 aa).

It belongs to the imidazoleglycerol-phosphate dehydratase family.

The protein resides in the cytoplasm. The catalysed reaction is D-erythro-1-(imidazol-4-yl)glycerol 3-phosphate = 3-(imidazol-4-yl)-2-oxopropyl phosphate + H2O. The protein operates within amino-acid biosynthesis; L-histidine biosynthesis; L-histidine from 5-phospho-alpha-D-ribose 1-diphosphate: step 6/9. This is Imidazoleglycerol-phosphate dehydratase from Saccharopolyspora erythraea (strain ATCC 11635 / DSM 40517 / JCM 4748 / NBRC 13426 / NCIMB 8594 / NRRL 2338).